Reading from the N-terminus, the 275-residue chain is NH(3)-dependent NAD(+) synthetase (275 aa).

ATP is bound at residue 46-53; that stretch reads GISGGQDS. Asp-52 provides a ligand contact to Mg(2+). Arg-140 is a binding site for deamido-NAD(+). An ATP-binding site is contributed by Thr-160. Glu-165 is a Mg(2+) binding site. Deamido-NAD(+) is bound by residues Lys-173 and Asp-180. 2 residues coordinate ATP: Lys-189 and Thr-211. 260 to 261 is a binding site for deamido-NAD(+); the sequence is HK.

It belongs to the NAD synthetase family. In terms of assembly, homodimer.

It carries out the reaction deamido-NAD(+) + NH4(+) + ATP = AMP + diphosphate + NAD(+) + H(+). It functions in the pathway cofactor biosynthesis; NAD(+) biosynthesis; NAD(+) from deamido-NAD(+) (ammonia route): step 1/1. Its function is as follows. Catalyzes the ATP-dependent amidation of deamido-NAD to form NAD. Uses ammonia as a nitrogen source. This Salmonella paratyphi A (strain ATCC 9150 / SARB42) protein is NH(3)-dependent NAD(+) synthetase.